Here is a 143-residue protein sequence, read N- to C-terminus: Hemoglobin subunit alpha-2 (143 aa).

Ser-2 is modified (N-acetylserine). The 142-residue stretch at 2 to 143 (SLTEKDKAAV…LSLALAEKYR (142 aa)) folds into the Globin domain. Position 60 (His-60) interacts with O2. His-89 lines the heme b pocket.

Belongs to the globin family. Hb2 is a heterotetramer of two alpha-2 chains and two beta-1 chains; Hb3 is a heterotetramer of two alpha-2 chains and two beta-2 chains. In terms of tissue distribution, red blood cells.

Its function is as follows. Involved in oxygen transport from gills to the various peripheral tissues. This Anarhichas minor (Arctic spotted wolffish) protein is Hemoglobin subunit alpha-2 (hba2).